The primary structure comprises 474 residues: ATP synthase subunit beta (474 aa).

Residue 151–158 (GGAGVGKT) participates in ATP binding.

Belongs to the ATPase alpha/beta chains family. F-type ATPases have 2 components, CF(1) - the catalytic core - and CF(0) - the membrane proton channel. CF(1) has five subunits: alpha(3), beta(3), gamma(1), delta(1), epsilon(1). CF(0) has four main subunits: a(1), b(1), b'(1) and c(9-12).

Its subcellular location is the cell inner membrane. It catalyses the reaction ATP + H2O + 4 H(+)(in) = ADP + phosphate + 5 H(+)(out). Functionally, produces ATP from ADP in the presence of a proton gradient across the membrane. The catalytic sites are hosted primarily by the beta subunits. This chain is ATP synthase subunit beta, found in Roseobacter denitrificans (strain ATCC 33942 / OCh 114) (Erythrobacter sp. (strain OCh 114)).